We begin with the raw amino-acid sequence, 492 residues long: Ketol-acid reductoisomerase (NADP(+)) (492 aa).

One can recognise a KARI N-terminal Rossmann domain in the interval Leu14–Ser208. Residues Cys45 to Gln48, Arg68, Arg76, Ser78, and Asp108 to Gln110 contribute to the NADP(+) site. The active site involves His132. Gly158 contacts NADP(+). KARI C-terminal knotted domains follow at residues Ser209–Lys344 and Tyr345–Met485. Asp217, Glu221, Glu389, and Glu393 together coordinate Mg(2+). Ser414 is a binding site for substrate.

The protein belongs to the ketol-acid reductoisomerase family. Mg(2+) is required as a cofactor.

The catalysed reaction is (2R)-2,3-dihydroxy-3-methylbutanoate + NADP(+) = (2S)-2-acetolactate + NADPH + H(+). The enzyme catalyses (2R,3R)-2,3-dihydroxy-3-methylpentanoate + NADP(+) = (S)-2-ethyl-2-hydroxy-3-oxobutanoate + NADPH + H(+). It functions in the pathway amino-acid biosynthesis; L-isoleucine biosynthesis; L-isoleucine from 2-oxobutanoate: step 2/4. Its pathway is amino-acid biosynthesis; L-valine biosynthesis; L-valine from pyruvate: step 2/4. Its function is as follows. Involved in the biosynthesis of branched-chain amino acids (BCAA). Catalyzes an alkyl-migration followed by a ketol-acid reduction of (S)-2-acetolactate (S2AL) to yield (R)-2,3-dihydroxy-isovalerate. In the isomerase reaction, S2AL is rearranged via a Mg-dependent methyl migration to produce 3-hydroxy-3-methyl-2-ketobutyrate (HMKB). In the reductase reaction, this 2-ketoacid undergoes a metal-dependent reduction by NADPH to yield (R)-2,3-dihydroxy-isovalerate. In Haemophilus influenzae (strain 86-028NP), this protein is Ketol-acid reductoisomerase (NADP(+)).